The chain runs to 289 residues: Pyridoxal kinase PdxY (289 aa).

Residues serine 9 and 44–45 (TQ) contribute to the substrate site. ATP-binding residues include aspartate 112, valine 144, glutamate 149, and lysine 182. Residue aspartate 221 coordinates substrate.

It belongs to the pyridoxine kinase family. PdxY subfamily. Homodimer. Requires Mg(2+) as cofactor.

The catalysed reaction is pyridoxal + ATP = pyridoxal 5'-phosphate + ADP + H(+). The protein operates within cofactor metabolism; pyridoxal 5'-phosphate salvage; pyridoxal 5'-phosphate from pyridoxal: step 1/1. Pyridoxal kinase involved in the salvage pathway of pyridoxal 5'-phosphate (PLP). Catalyzes the phosphorylation of pyridoxal to PLP. The chain is Pyridoxal kinase PdxY from Vibrio campbellii (strain ATCC BAA-1116).